We begin with the raw amino-acid sequence, 216 residues long: Nudix hydrolase 26, chloroplastic (216 aa).

Residues 1 to 53 (MALYRPLLLHHPTSPSVTTFLRNYPSKPIKFSSLPFLHRCRKSRVSSSSARCC) constitute a chloroplast transit peptide. A Nudix hydrolase domain is found at 62 to 209 (GYRRNVGVCL…KKPVYKEVMS (148 aa)). Residues 95-116 (GGIDEGEDPRVAVMRELKEETG) carry the Nudix box motif. Residues Glu-110 and Glu-114 each coordinate Mn(2+).

The protein belongs to the Nudix hydrolase family. It depends on Mg(2+) as a cofactor. The cofactor is Mn(2+). Expressed in roots, leaves, stems and inflorescences.

Its subcellular location is the plastid. It is found in the chloroplast. Functionally, mediates the hydrolysis of some nucleoside diphosphate derivatives. Can use diadenosine 5',5'''-P(1)P(5) pentaphosphate (Ap(5)A), diadenosine 5',5'''-P(1)P(4) tetraphosphate (Ap(4)A) and diadenosine 5',5'''-P(1)P(3) triphosphate (Ap(3)A) as substrates. This is Nudix hydrolase 26, chloroplastic (NUDT26) from Arabidopsis thaliana (Mouse-ear cress).